Reading from the N-terminus, the 2036-residue chain is Ral GTPase-activating protein subunit alpha-1 (2036 aa).

2 disordered regions span residues 343–384 (LVSR…SSLC) and 476–497 (EEGEKREEENGTNTADHVRNSS). Residues 345-365 (SREESKNDNADKTDRTTEPEQ) are compositionally biased toward basic and acidic residues. Polar residues-rich tracts occupy residues 366–384 (SHSNTSTLTEREPSSSSLC) and 486–497 (GTNTADHVRNSS). Residues Ser-711 and Ser-721 each carry the phosphoserine modification. The segment at 715 to 753 (SFSRGWSRDQPGQAPMRQRSATTTGSPGTEKARSIVRQK) is disordered. Thr-754 is subject to Phosphothreonine. Ser-773 is subject to Phosphoserine. Thr-778 is subject to Phosphothreonine. Phosphoserine is present on residues Ser-797, Ser-860, Ser-861, and Ser-864. Disordered regions lie at residues 849–910 (SGNA…SDSH) and 982–1009 (TITGSESASPVHSPLGSRSQTPSPSTLN). A compositionally biased stretch (polar residues) spans 850–863 (GNASTMTRRGSSPG). Positions 895–910 (SPASAGSSDLISSDSH) are enriched in low complexity. A compositionally biased stretch (polar residues) spans 983–1009 (ITGSESASPVHSPLGSRSQTPSPSTLN). 4 positions are modified to phosphoserine: Ser-986, Ser-990, Ser-994, and Ser-1000. Phosphothreonine is present on Thr-1002. Phosphoserine occurs at positions 1004 and 1478. Residues 1327–2035 (FTNKTVAHVA…PYHHLPSDAD (709 aa)) are minimal domain that binds to TCF3/E12. The stretch at 1716–1744 (KQENDVINAILKQHTEEKEFVEKHFNDLN) forms a coiled coil. In terms of domain architecture, Rap-GAP spans 1796–2004 (LRNLDSRQCR…EERARYLQTI (209 aa)).

In terms of assembly, component of the heterodimeric RalGAP1 complex with RALGAPB. Heterodimerization is required for activity. Interacts with the HLH region of TCF3/isoform E12. As to expression, widely expressed.

Its subcellular location is the cytoplasm. The protein resides in the nucleus. Its function is as follows. Catalytic subunit of the heterodimeric RalGAP1 complex which acts as a GTPase activator for the Ras-like small GTPases RALA and RALB. The polypeptide is Ral GTPase-activating protein subunit alpha-1 (RALGAPA1) (Homo sapiens (Human)).